Reading from the N-terminus, the 559-residue chain is Leucine-rich repeat-containing protein 71 (559 aa).

Over residues 1-18 the composition is skewed to low complexity; it reads MSSEQSAPGASPRAPRPG. Residues 1–56 are disordered; sequence MSSEQSAPGASPRAPRPGTQKSSGAVTKKGERAAKEKPATVLPPVGEEEPKSPEEY. A compositionally biased stretch (basic and acidic residues) spans 28-38; it reads KKGERAAKEKP. LRR repeat units follow at residues 172 to 193, 196 to 216, 221 to 241, 253 to 266, and 281 to 302; these read NLWK…LPLC, TLRK…HKLM, TIAH…QLLG, TLVS…HIGD, and SLLW…KLAE. Composition is skewed to basic and acidic residues over residues 324–348 and 380–391; these read KGTQ…REKS and KSWELAKKEEKL. The segment at 324 to 427 is disordered; that stretch reads KGTQERSRSP…PEQKPSRAKG (104 aa).

In Homo sapiens (Human), this protein is Leucine-rich repeat-containing protein 71 (LRRC71).